A 331-amino-acid chain; its full sequence is Ribosomal RNA small subunit methyltransferase C (331 aa).

This sequence belongs to the methyltransferase superfamily. RsmC family. In terms of assembly, monomer.

Its subcellular location is the cytoplasm. It carries out the reaction guanosine(1207) in 16S rRNA + S-adenosyl-L-methionine = N(2)-methylguanosine(1207) in 16S rRNA + S-adenosyl-L-homocysteine + H(+). Functionally, specifically methylates the guanine in position 1207 of 16S rRNA in the 30S particle. The sequence is that of Ribosomal RNA small subunit methyltransferase C from Ectopseudomonas mendocina (strain ymp) (Pseudomonas mendocina).